The following is a 242-amino-acid chain: DNA repair protein RecO (242 aa).

The protein belongs to the RecO family.

Functionally, involved in DNA repair and RecF pathway recombination. The chain is DNA repair protein RecO from Wolbachia pipientis subsp. Culex pipiens (strain wPip).